Consider the following 144-residue polypeptide: Gonadotropin subunit beta-2 (144 aa).

The signal sequence occupies residues 1-27 (MGTPVKILVVRNHILFSVVVLLAVAQS). 6 disulfides stabilise this stretch: cysteine 33–cysteine 81, cysteine 47–cysteine 96, cysteine 50–cysteine 134, cysteine 58–cysteine 112, cysteine 62–cysteine 114, and cysteine 117–cysteine 124. Asparagine 37 is a glycosylation site (N-linked (GlcNAc...) asparagine). Positions 143–144 (VY) are excised as a propeptide.

It belongs to the glycoprotein hormones subunit beta family. Heterodimer of an alpha and a beta chain.

The protein localises to the secreted. Involved in gametogenesis and steroidogenesis. This chain is Gonadotropin subunit beta-2 (cgbb), found in Cyprinus carpio (Common carp).